A 305-amino-acid chain; its full sequence is rRNA 2'-O-methyltransferase fibrillarin (305 aa).

Residues 1 to 70 form a disordered region; the sequence is MAYTPGSRGG…SGGRGGAKGG (70 aa). Residues 7 to 69 show a composition bias toward gly residues; it reads SRGGRGGSRG…SSGGRGGAKG (63 aa). S111 and S114 each carry phosphoserine. S-adenosyl-L-methionine-binding positions include 160–161, 179–180, 204–205, and 224–227; these read TS, EF, DA, and DVAQ.

The protein belongs to the methyltransferase superfamily. Fibrillarin family. As to quaternary structure, component of box C/D small nucleolar ribonucleoprotein (snoRNP) particles. In terms of processing, by homology to other fibrillarins, some or all of the N-terminal domain arginines are modified to asymmetric dimethylarginine (DMA).

The protein resides in the nucleus. It is found in the nucleolus. The enzyme catalyses L-glutaminyl-[histone H2A] + S-adenosyl-L-methionine = N(5)-methyl-L-glutaminyl-[histone H2A] + S-adenosyl-L-homocysteine + H(+). Functionally, S-adenosyl-L-methionine-dependent methyltransferase that has the ability to methylate both RNAs and proteins. Involved in pre-rRNA processing by catalyzing the site-specific 2'-hydroxyl methylation of ribose moieties in pre-ribosomal RNA. Site specificity is provided by a guide RNA that base pairs with the substrate. Methylation occurs at a characteristic distance from the sequence involved in base pairing with the guide RNA. Also acts as a protein methyltransferase by mediating methylation of 'Gln-105' of histone H2A (H2AQ105me), a modification that impairs binding of the FACT complex and is specifically present at 35S ribosomal DNA locus. The polypeptide is rRNA 2'-O-methyltransferase fibrillarin (fib1) (Schizosaccharomyces pombe (strain 972 / ATCC 24843) (Fission yeast)).